A 200-amino-acid polypeptide reads, in one-letter code: NADH-quinone oxidoreductase subunit B (200 aa).

Positions 78, 79, 144, and 174 each coordinate [4Fe-4S] cluster.

Belongs to the complex I 20 kDa subunit family. As to quaternary structure, NDH-1 is composed of 14 different subunits. Subunits NuoB, C, D, E, F, and G constitute the peripheral sector of the complex. Requires [4Fe-4S] cluster as cofactor.

It localises to the cell membrane. The catalysed reaction is a quinone + NADH + 5 H(+)(in) = a quinol + NAD(+) + 4 H(+)(out). NDH-1 shuttles electrons from NADH, via FMN and iron-sulfur (Fe-S) centers, to quinones in the respiratory chain. The immediate electron acceptor for the enzyme in this species is believed to be ubiquinone. Couples the redox reaction to proton translocation (for every two electrons transferred, four hydrogen ions are translocated across the cytoplasmic membrane), and thus conserves the redox energy in a proton gradient. The protein is NADH-quinone oxidoreductase subunit B of Dehalococcoides mccartyi (strain ATCC BAA-2266 / KCTC 15142 / 195) (Dehalococcoides ethenogenes (strain 195)).